We begin with the raw amino-acid sequence, 743 residues long: Probable TonB-dependent receptor BfrD (743 aa).

The signal sequence occupies residues 1-30 (MKFYSSHPMPESLAAAIAVPLLGLLPAAQA). The 107-residue stretch at 62–168 (PLADTPRTVQ…AGGSINLVTK (107 aa)) folds into the TBDR plug domain. A TBDR beta-barrel domain is found at 173 to 743 (QDFTEVQAGI…SAMLTFKLSY (571 aa)). A TonB C-terminal box motif is present at residues 726-743 (YAALGPGRSAMLTFKLSY).

The protein belongs to the TonB-dependent receptor family.

The protein localises to the cell outer membrane. Probably involved in iron transport. In Bordetella pertussis (strain Tohama I / ATCC BAA-589 / NCTC 13251), this protein is Probable TonB-dependent receptor BfrD (bfrD).